Reading from the N-terminus, the 438-residue chain is MQVTVEKKEGIHCSLLIEVPANEIDSVVSKEINRTAKTIKMDGFRPGKVPAGMVKKKYGEQIRMEVISDLIPQKYSKAIQDEKLAVAGIEVELKENKEGQPLKFVANLELFPEFEVTGFEKIEVQKPVVELTDKEVKQMIENLRKQFATFSEVDKVVEKDDKVTIDFVGKKDGEAFEGGTANDIDVIIGSGQMIPGFEDGIIGMKKGEQKTITVTFPQDYQNKDLAEAETTFDITVKKIQQAELPEVNDEFVKKFGVKGGVDTFENEIKENMQRELKFILQRKVKDQVFKGLREIAEFETPKSLIKREIDAAKQNLLKQMGGAKGFDVNQLSDNLFEANAKQKVETSLILDSIMNSQEFKAEEAEVESLLDELVQAYEEPEKTKEQIKKNDKEIANLKALVIENKLTDWVLEQAKVTEKTEDFFEVIKENMQAQQAGF.

Positions 160–245 (DDKVTIDFVG…VKKIQQAELP (86 aa)) constitute a PPIase FKBP-type domain.

This sequence belongs to the FKBP-type PPIase family. Tig subfamily.

It is found in the cytoplasm. It carries out the reaction [protein]-peptidylproline (omega=180) = [protein]-peptidylproline (omega=0). Functionally, involved in protein export. Acts as a chaperone by maintaining the newly synthesized protein in an open conformation. Functions as a peptidyl-prolyl cis-trans isomerase. This chain is Trigger factor, found in Francisella tularensis subsp. tularensis (strain FSC 198).